The sequence spans 427 residues: Terminal nucleotidyltransferase 5B (427 aa).

The disordered stretch occupies residues 1–49 (MMPSESGAESLEQPAAQVGTGAASAVATAGAAGGGPDPEASSASLGRHQ). The span at 15 to 30 (AAQVGTGAASAVATAG) shows a compositional bias: low complexity.

Belongs to the TENT family.

The protein localises to the cytoplasm. Its subcellular location is the nucleus. It catalyses the reaction RNA(n) + ATP = RNA(n)-3'-adenine ribonucleotide + diphosphate. Functionally, catalyzes the transfer of one adenosine molecule from an ATP to an mRNA poly(A) tail bearing a 3'-OH terminal group in an ATP hydrolysis-dependent manner. May be involved in maintaining the translation efficiency of at least some genes through preventing degradation of their mRNAs. Prefers RNA molecules that are adenosine-rich close to 3'-end. In addition, may inhibit cell proliferation and cell cycle progression through ubiquitination of beta-catenin/CTNNB1. The protein is Terminal nucleotidyltransferase 5B of Mus musculus (Mouse).